A 28-amino-acid chain; its full sequence is Grammistin Gs A (28 aa).

Belongs to the grammistin family. Group 3 subfamily. In terms of assembly, exists as aggregates of 3-4 molecules. Expressed by the skin glands.

It localises to the secreted. Thanks to its amphiphilic alpha-helice(s), it may integrate into membrane phospholipids, leading to lysis of the membrane. Has no substantial hemolytic activity. Has antibacterial activity with a broad spectrum against various species of bacteria including both Gram-positive and Gram-negative groups. The polypeptide is Grammistin Gs A (Grammistes sexlineatus (Goldenstriped soapfish)).